The chain runs to 114 residues: Large ribosomal subunit protein bL20c (114 aa).

This sequence belongs to the bacterial ribosomal protein bL20 family.

The protein resides in the plastid. In terms of biological role, binds directly to 23S ribosomal RNA and is necessary for the in vitro assembly process of the 50S ribosomal subunit. It is not involved in the protein synthesizing functions of that subunit. This Prototheca wickerhamii protein is Large ribosomal subunit protein bL20c.